The primary structure comprises 198 residues: Suppressor of cytokine signaling 2 (198 aa).

Residues 1 to 29 form a disordered region; that stretch reads MTLRCLEPSGNGADRTRSQWGTAGLPEEQ. The segment at 1-75 is interaction with AREL1; it reads MTLRCLEPSG…PEGTFLIRDS (75 aa). S30 carries the post-translational modification Phosphoserine. Residues 48–156 form the SH2 domain; sequence WYWGSMTVNE…TVHLYLTKPL (109 aa). S52 is subject to Phosphoserine; by PKC. The SOCS box domain maps to 151 to 197; the sequence is YLTKPLYTSAPTLQHFCRLAINKCTGTIWGLPLPTRLKDYLEEYKFQ. A Glycyl lysine isopeptide (Lys-Gly) (interchain with G-Cter in ubiquitin) cross-link involves residue K173.

Substrate-recognition component of the ECS(SOCS2) complex, composed of SOCS2, CUL5, ELOB, ELOC and RNF7/RBX2. Interacts with IGF1R. Interacts with DCUN1D1. Ubiquitinated; mediated by AREL1 and leading to its subsequent proteasomal degradation. Ubiquitination is dependent on phosphorylation at Ser-52, by PKC and is stimulated by LPS. In terms of processing, phosphorylation at Ser-52 by PKC facilitates its ubiquitination and proteasomal degradation. As to expression, expressed primarily in the testis, some expression in liver and lung.

The protein localises to the cytoplasm. Its pathway is protein modification; protein ubiquitination. Substrate-recognition component of a cullin-5-RING E3 ubiquitin-protein ligase complex (ECS complex, also named CRL5 complex), which mediates the ubiquitination and subsequent proteasomal degradation of target proteins, such as EPOR and GHR. Specifically recognizes and binds phosphorylated proteins via its SH2 domain, promoting their ubiquitination. The ECS(SOCS2) complex acts as a key regulator of growth hormone receptor (GHR) levels by mediating ubiquitination and degradation of GHR, following GHR phosphorylation by JAK2. The ECS(SOCS2) also catalyzes ubiquitination and degradation of JAK2-phosphorylated EPOR. In Mus musculus (Mouse), this protein is Suppressor of cytokine signaling 2.